Consider the following 260-residue polypeptide: 3'-5' ssDNA/RNA exonuclease TatD (260 aa).

A divalent metal cation-binding residues include Glu-91, His-127, and His-152.

The protein belongs to the metallo-dependent hydrolases superfamily. TatD-type hydrolase family. TatD subfamily. As to quaternary structure, monomer. Requires Mg(2+) as cofactor.

It localises to the cytoplasm. In terms of biological role, 3'-5' exonuclease that prefers single-stranded DNA and RNA. May play a role in the H(2)O(2)-induced DNA damage repair. This Enterobacter sp. (strain 638) protein is 3'-5' ssDNA/RNA exonuclease TatD.